The chain runs to 366 residues: UDP-N-acetylglucosamine 2-epimerase (366 aa).

His-207 is an active-site residue.

The protein belongs to the UDP-N-acetylglucosamine 2-epimerase family. Homodimer.

It is found in the cytoplasm. The enzyme catalyses UDP-N-acetyl-alpha-D-glucosamine = UDP-N-acetyl-alpha-D-mannosamine. Catalyzes the reversible epimerization at C-2 of UDP-N-acetylglucosamine (UDP-GlcNAc) to produce UDP-N-acetylmannosamine (UDP-ManNAc), the activated donor of ManNAc residues. This chain is UDP-N-acetylglucosamine 2-epimerase (wecB), found in Methanocaldococcus jannaschii (strain ATCC 43067 / DSM 2661 / JAL-1 / JCM 10045 / NBRC 100440) (Methanococcus jannaschii).